A 446-amino-acid chain; its full sequence is Methionine aminopeptidase 2 (446 aa).

A disordered region spans residues 1–91 (MAAQVTDALK…PPRVLLSNLF (91 aa)). Over residues 36–48 (EAEDSDDEEEEPV) the composition is skewed to acidic residues. Residues 59-72 (KKKRKRKKKPKKKA) show a composition bias toward basic residues. A substrate-binding site is contributed by His199. A divalent metal cation-binding residues include Asp219, Asp230, and His299. Residue His307 coordinates substrate. Positions 332 and 427 each coordinate a divalent metal cation.

This sequence belongs to the peptidase M24A family. Methionine aminopeptidase eukaryotic type 2 subfamily. It depends on Co(2+) as a cofactor. Zn(2+) is required as a cofactor. Mn(2+) serves as cofactor. The cofactor is Fe(2+).

The protein resides in the cytoplasm. The enzyme catalyses Release of N-terminal amino acids, preferentially methionine, from peptides and arylamides.. Functionally, cotranslationally removes the N-terminal methionine from nascent proteins. The N-terminal methionine is often cleaved when the second residue in the primary sequence is small and uncharged (Met-Ala-, Cys, Gly, Pro, Ser, Thr, or Val). The polypeptide is Methionine aminopeptidase 2 (Sclerotinia sclerotiorum (strain ATCC 18683 / 1980 / Ss-1) (White mold)).